The primary structure comprises 87 residues: Small ribosomal subunit protein bS20 (87 aa).

Positions 1 to 26 are disordered; the sequence is MANTAQAKKRVRQNIKQRERNSGLRS.

It belongs to the bacterial ribosomal protein bS20 family.

Its function is as follows. Binds directly to 16S ribosomal RNA. The chain is Small ribosomal subunit protein bS20 from Nitrosomonas eutropha (strain DSM 101675 / C91 / Nm57).